Consider the following 521-residue polypeptide: Glutamyl-tRNA(Gln) amidotransferase subunit B, mitochondrial (521 aa).

Residues 1-22 (MIALLRWGIARPSAPLRWSRCF) constitute a mitochondrion transit peptide.

This sequence belongs to the GatB/GatE family. GatB subfamily. Subunit of the heterotrimeric GatCAB amidotransferase (AdT) complex, composed of A, B and C subunits.

It localises to the mitochondrion. It catalyses the reaction L-glutamyl-tRNA(Gln) + L-glutamine + ATP + H2O = L-glutaminyl-tRNA(Gln) + L-glutamate + ADP + phosphate + H(+). Allows the formation of correctly charged Gln-tRNA(Gln) through the transamidation of misacylated Glu-tRNA(Gln) in the mitochondria. The reaction takes place in the presence of glutamine and ATP through an activated gamma-phospho-Glu-tRNA(Gln). This chain is Glutamyl-tRNA(Gln) amidotransferase subunit B, mitochondrial, found in Cryptococcus neoformans var. neoformans serotype D (strain JEC21 / ATCC MYA-565) (Filobasidiella neoformans).